The primary structure comprises 100 residues: uncharacterized protein (100 aa).

May interact with ribosomes.

This is an uncharacterized protein from Saccharomyces cerevisiae (strain ATCC 204508 / S288c) (Baker's yeast).